Here is a 506-residue protein sequence, read N- to C-terminus: 2,3-bisphosphoglycerate-independent phosphoglycerate mutase (506 aa).

Mn(2+) contacts are provided by D13 and S63. S63 functions as the Phosphoserine intermediate in the catalytic mechanism. Substrate-binding positions include H124, 153–154 (RD), R183, R189, 254–257 (RADR), and K330. Mn(2+) is bound by residues D396, H400, D437, H438, and H456.

This sequence belongs to the BPG-independent phosphoglycerate mutase family. Monomer. Requires Mn(2+) as cofactor.

The enzyme catalyses (2R)-2-phosphoglycerate = (2R)-3-phosphoglycerate. It functions in the pathway carbohydrate degradation; glycolysis; pyruvate from D-glyceraldehyde 3-phosphate: step 3/5. In terms of biological role, catalyzes the interconversion of 2-phosphoglycerate and 3-phosphoglycerate. The polypeptide is 2,3-bisphosphoglycerate-independent phosphoglycerate mutase (Cereibacter sphaeroides (strain ATCC 17023 / DSM 158 / JCM 6121 / CCUG 31486 / LMG 2827 / NBRC 12203 / NCIMB 8253 / ATH 2.4.1.) (Rhodobacter sphaeroides)).